A 359-amino-acid chain; its full sequence is Peptide chain release factor 1 (359 aa).

Gln-236 is subject to N5-methylglutamine.

Belongs to the prokaryotic/mitochondrial release factor family. Methylated by PrmC. Methylation increases the termination efficiency of RF1.

It is found in the cytoplasm. Peptide chain release factor 1 directs the termination of translation in response to the peptide chain termination codons UAG and UAA. The chain is Peptide chain release factor 1 from Ureaplasma parvum serovar 3 (strain ATCC 27815 / 27 / NCTC 11736).